A 946-amino-acid chain; its full sequence is Bifunctional glutamine synthetase adenylyltransferase/adenylyl-removing enzyme (946 aa).

Residues 1 to 440 (MKPLSSPLQQ…VFNELIGDDE (440 aa)) are adenylyl removase. An adenylyl transferase region spans residues 449-946 (SEQWRELWQD…ASWQKWLVEE (498 aa)).

This sequence belongs to the GlnE family. It depends on Mg(2+) as a cofactor.

The catalysed reaction is [glutamine synthetase]-O(4)-(5'-adenylyl)-L-tyrosine + phosphate = [glutamine synthetase]-L-tyrosine + ADP. The enzyme catalyses [glutamine synthetase]-L-tyrosine + ATP = [glutamine synthetase]-O(4)-(5'-adenylyl)-L-tyrosine + diphosphate. Functionally, involved in the regulation of glutamine synthetase GlnA, a key enzyme in the process to assimilate ammonia. When cellular nitrogen levels are high, the C-terminal adenylyl transferase (AT) inactivates GlnA by covalent transfer of an adenylyl group from ATP to specific tyrosine residue of GlnA, thus reducing its activity. Conversely, when nitrogen levels are low, the N-terminal adenylyl removase (AR) activates GlnA by removing the adenylyl group by phosphorolysis, increasing its activity. The regulatory region of GlnE binds the signal transduction protein PII (GlnB) which indicates the nitrogen status of the cell. This chain is Bifunctional glutamine synthetase adenylyltransferase/adenylyl-removing enzyme, found in Escherichia coli O81 (strain ED1a).